Reading from the N-terminus, the 310-residue chain is MIIVTGGAGFIGSNIVKALNDIGYTDILVVDNLKDGTKFVNLVDLNIADYMDKEDFQVQIMSGEEFGEVEAVFHEGACSSTTEWDGKYMMDNNYQYSKELLHYCLEREIPFLYASSAATYGGRTSDFIESREYEKPLNVYGYSKFLFDEYVRQILPEANSQITGFRYFNVYGPREGHKGSMASVAFHLNTQLNNGESPKLFEGSENFKRDFIYVGDVAAVNLWFWQNGVSGIFNCGTGRAESFQAVADAALAFHKKGSIEYIPFPEKLKGRYQAFTQADLTNLRAAGYDKPFKTVAEGVAEYMAWLNRDA.

NADP(+)-binding positions include 10–11 (FI), 31–32 (DN), Lys-38, Lys-53, 75–79 (EGACS), and Asn-92. Tyr-140 serves as the catalytic Proton acceptor. Residue Lys-144 participates in NADP(+) binding. Asn-169 serves as a coordination point for substrate. Val-170 and Lys-178 together coordinate NADP(+). Lys-178 functions as the Proton acceptor in the catalytic mechanism. Residues Ser-180, His-187, 201-204 (FEGS), Arg-209, and Tyr-272 contribute to the substrate site.

Belongs to the NAD(P)-dependent epimerase/dehydratase family. HldD subfamily. Homopentamer. Requires NADP(+) as cofactor.

The enzyme catalyses ADP-D-glycero-beta-D-manno-heptose = ADP-L-glycero-beta-D-manno-heptose. The protein operates within nucleotide-sugar biosynthesis; ADP-L-glycero-beta-D-manno-heptose biosynthesis; ADP-L-glycero-beta-D-manno-heptose from D-glycero-beta-D-manno-heptose 7-phosphate: step 4/4. Functionally, catalyzes the interconversion between ADP-D-glycero-beta-D-manno-heptose and ADP-L-glycero-beta-D-manno-heptose via an epimerization at carbon 6 of the heptose. This chain is ADP-L-glycero-D-manno-heptose-6-epimerase, found in Cronobacter sakazakii (strain ATCC BAA-894) (Enterobacter sakazakii).